Reading from the N-terminus, the 419-residue chain is L-rhamnose isomerase (419 aa).

Mn(2+) is bound by residues H262, D294, and D296.

It belongs to the rhamnose isomerase family. Homotetramer. The cofactor is Mn(2+).

It localises to the cytoplasm. It catalyses the reaction L-rhamnopyranose = L-rhamnulose. It functions in the pathway carbohydrate degradation; L-rhamnose degradation; glycerone phosphate from L-rhamnose: step 1/3. Functionally, catalyzes the interconversion of L-rhamnose and L-rhamnulose. The polypeptide is L-rhamnose isomerase (Escherichia coli (strain SMS-3-5 / SECEC)).